We begin with the raw amino-acid sequence, 199 residues long: Inner membrane protein E199L (199 aa).

N131 carries N-linked (GlcNAc...) asparagine; by host glycosylation. The helical transmembrane segment at 150–170 (INVMNHPFLTLILIILILVII) threads the bilayer.

This sequence belongs to the asfivirus E199L family. As to quaternary structure, interacts with host PYCR2; this interaction results in autophagy activation. In terms of processing, contains intramolecular disulfide bonds.

Its subcellular location is the virion membrane. The protein localises to the host membrane. Essential for viral fusion with host endosomal membrane and core release. Not required for virus morphogenesis and egress. Induces complete autophagy through the interaction with and down-regulation of host PYCR2. This chain is Inner membrane protein E199L, found in African swine fever virus (isolate Tick/Malawi/Lil 20-1/1983) (ASFV).